The sequence spans 372 residues: Queuine tRNA-ribosyltransferase (372 aa).

Catalysis depends on Asp-92, which acts as the Proton acceptor. Substrate-binding positions include 92 to 96, Asp-146, Gln-188, and Gly-215; that span reads DSGGF. Positions 246 to 252 are RNA binding; that stretch reads GIGTLRE. The active-site Nucleophile is Asp-265. The interval 270–274 is RNA binding; important for wobble base 34 recognition; sequence TRLGR. Residues Cys-303, Cys-305, Cys-308, and His-334 each contribute to the Zn(2+) site.

The protein belongs to the queuine tRNA-ribosyltransferase family. As to quaternary structure, homodimer. Within each dimer, one monomer is responsible for RNA recognition and catalysis, while the other monomer binds to the replacement base PreQ1. Zn(2+) is required as a cofactor.

The catalysed reaction is 7-aminomethyl-7-carbaguanine + guanosine(34) in tRNA = 7-aminomethyl-7-carbaguanosine(34) in tRNA + guanine. Its pathway is tRNA modification; tRNA-queuosine biosynthesis. Its function is as follows. Catalyzes the base-exchange of a guanine (G) residue with the queuine precursor 7-aminomethyl-7-deazaguanine (PreQ1) at position 34 (anticodon wobble position) in tRNAs with GU(N) anticodons (tRNA-Asp, -Asn, -His and -Tyr). Catalysis occurs through a double-displacement mechanism. The nucleophile active site attacks the C1' of nucleotide 34 to detach the guanine base from the RNA, forming a covalent enzyme-RNA intermediate. The proton acceptor active site deprotonates the incoming PreQ1, allowing a nucleophilic attack on the C1' of the ribose to form the product. After dissociation, two additional enzymatic reactions on the tRNA convert PreQ1 to queuine (Q), resulting in the hypermodified nucleoside queuosine (7-(((4,5-cis-dihydroxy-2-cyclopenten-1-yl)amino)methyl)-7-deazaguanosine). In Prochlorococcus marinus (strain MIT 9303), this protein is Queuine tRNA-ribosyltransferase.